The sequence spans 163 residues: Peptide deformylase 3 (163 aa).

Fe cation is bound by residues cysteine 91 and histidine 133. Residue glutamate 134 is part of the active site. Histidine 137 is a Fe cation binding site.

It belongs to the polypeptide deformylase family. It depends on Fe(2+) as a cofactor.

It catalyses the reaction N-terminal N-formyl-L-methionyl-[peptide] + H2O = N-terminal L-methionyl-[peptide] + formate. Removes the formyl group from the N-terminal Met of newly synthesized proteins. Requires at least a dipeptide for an efficient rate of reaction. N-terminal L-methionine is a prerequisite for activity but the enzyme has broad specificity at other positions. This Shewanella oneidensis (strain ATCC 700550 / JCM 31522 / CIP 106686 / LMG 19005 / NCIMB 14063 / MR-1) protein is Peptide deformylase 3.